The following is a 241-amino-acid chain: MTNVEVAATVAPNQLLDTLTLDNIKEYSNDIDIIELRIDQWEDRHLELLKSNLEQLQELNINANVLVTYRTISQGGKGEMTHEAYMTLLKEIIKNHHCQMIDIEWDSDFDVFAHRDLINLAHRYNKQVVISYHNFQETPDIDILKFTYYKMNQLNPDYVKIAVMPQDKEDVATLLEAVATSADTLDAKVIGISMSKVGLVSRTAQGVFGGTVSYGCLGEPQAPGQIHVKTLKQQLLFYSNH.

Residues 35–37 (ELR) and arginine 70 contribute to the 3-dehydroquinate site. The Proton donor/acceptor role is filled by histidine 133. Catalysis depends on lysine 160, which acts as the Schiff-base intermediate with substrate. Positions 202 and 225 each coordinate 3-dehydroquinate.

The protein belongs to the type-I 3-dehydroquinase family. As to quaternary structure, homodimer.

The enzyme catalyses 3-dehydroquinate = 3-dehydroshikimate + H2O. It participates in metabolic intermediate biosynthesis; chorismate biosynthesis; chorismate from D-erythrose 4-phosphate and phosphoenolpyruvate: step 3/7. Involved in the third step of the chorismate pathway, which leads to the biosynthesis of aromatic amino acids. Catalyzes the cis-dehydration of 3-dehydroquinate (DHQ) and introduces the first double bond of the aromatic ring to yield 3-dehydroshikimate. The protein is 3-dehydroquinate dehydratase of Staphylococcus haemolyticus (strain JCSC1435).